The following is a 144-amino-acid chain: Cysteine-rich tail protein 1 (144 aa).

Positions 51 to 105 are disordered; it reads APEPTHLLQPTEVPGPKGAKGNQGAAPIQNQQAWQQPGNPYSSSQRQAGLTYAGP. Residues 78–98 are compositionally biased toward polar residues; sequence IQNQQAWQQPGNPYSSSQRQA.

It belongs to the CYSRT1 family. Interacts with LCE1B; the interaction is direct. Interacts with LCE2C; the interaction is direct. Interacts with LCE3A; the interaction is direct. Interacts with LCE3C; the interaction is direct. Interacts with LCE4A; the interaction is direct. Interacts with LCE5A; the interaction is direct. Interacts with LCE1C. Interacts with LCE1D. Interacts with LCE1E. Interacts with LCE2A. Interacts with LCE3D. Interacts with LCE3E. Interacts with LCE1A. As to expression, expressed in the stratum granulosum, in skin and oral epithelia (at protein level).

It is found in the cornified envelope. Functionally, component of the stratum corneum that may contribute to epidermal antimicrobial host defenses. The protein is Cysteine-rich tail protein 1 (CYSRT1) of Homo sapiens (Human).